Reading from the N-terminus, the 349-residue chain is MQTTINNGQTSSKETLLTPRFYTTDFEEMANMDISGNQEDFLAILEEFRADYNSEHFIRDEEFNQSWSNLEHKTKSLFIEFLERSCTAEFSGFLLYKELSRKLKDRNPVIAECFLLMSRDEARHAGFLNKAIGDFNLSLDLGFLTKSRKYTFFSPKFIFYATYLSEKIGYWRYITIYRHLEQHPEHRIYPIFRFFENWCQDENRHGDFFAALLKSQPHFLNDWKAKMWCRFFLLSVFATMYLNDFQRIDFYNAIGLDSRQYDMQVIRKTNESAARVFPVALDVDNPKFFKYLDTCACDNRALIDIDNNNSPLFIKSIVKIPLYFSLFANLLKIYLIKPIDSKTVWNTVR.

It belongs to the AcsF family. Requires Fe cation as cofactor.

The protein resides in the plastid. The protein localises to the chloroplast. It catalyses the reaction Mg-protoporphyrin IX 13-monomethyl ester + 3 NADPH + 3 O2 + 2 H(+) = 3,8-divinyl protochlorophyllide a + 3 NADP(+) + 5 H2O. It functions in the pathway porphyrin-containing compound metabolism; chlorophyll biosynthesis (light-independent). Catalyzes the formation of the isocyclic ring in chlorophyll biosynthesis. Mediates the cyclase reaction, which results in the formation of divinylprotochlorophyllide (Pchlide) characteristic of all chlorophylls from magnesium-protoporphyrin IX 13-monomethyl ester (MgPMME). This is Magnesium-protoporphyrin IX monomethyl ester [oxidative] cyclase from Pyropia yezoensis (Susabi-nori).